The sequence spans 146 residues: Glycosylation-dependent cell adhesion molecule 1 (146 aa).

Positions 1–19 are cleaved as a signal peptide; sequence MKFFTVLLFASLAATSLAA. Residues 25–112 are disordered; it reads DELHLRTQPT…SAATSEGKLT (88 aa). Positions 48–60 are enriched in basic and acidic residues; it reads ISKESTSSKDLSK. Phosphoserine occurs at positions 54, 59, and 71. Residues 74–106 are compositionally biased toward polar residues; the sequence is NVGTESTKPQSQEAQDGLRSGSSQQEETTSAAT.

The protein belongs to the PP3/GlyCAM-1 family. In terms of processing, extensively O-glycosylated. In terms of tissue distribution, lymph nodes. Associated with the lumenal surface of the high endothelial venules of peripheral lymph nodes.

It is found in the cell membrane. Its function is as follows. Adhesion molecule that accomplishes cell binding by presenting carbohydrate(s) to the lectin domain of L-selectin. This Rattus norvegicus (Rat) protein is Glycosylation-dependent cell adhesion molecule 1 (Glycam1).